Reading from the N-terminus, the 229-residue chain is Potassium/proton antiporter CemA (229 aa).

The next 3 helical transmembrane spans lie at 7–27 (FTPL…SLSF), 114–134 (IISF…LVIL), and 190–210 (ISGL…YWIF).

This sequence belongs to the CemA family.

Its subcellular location is the plastid. It is found in the chloroplast inner membrane. The enzyme catalyses K(+)(in) + H(+)(out) = K(+)(out) + H(+)(in). Functionally, contributes to K(+)/H(+) antiport activity by supporting proton efflux to control proton extrusion and homeostasis in chloroplasts in a light-dependent manner to modulate photosynthesis. Prevents excessive induction of non-photochemical quenching (NPQ) under continuous-light conditions. Indirectly promotes efficient inorganic carbon uptake into chloroplasts. In Jasminum nudiflorum (Winter jasmine), this protein is Potassium/proton antiporter CemA.